We begin with the raw amino-acid sequence, 568 residues long: Protein phosphatase 1 regulatory inhibitor subunit 16B (568 aa).

Residues 15–55 adopt a coiled-coil conformation; the sequence is EKVPTLERLRAAQKRRAQQLKKWAQYEQDLQHRKRKHERKR. Phosphoserine is present on Ser-69. 4 ANK repeats span residues 100 to 129, 133 to 162, 228 to 257, and 261 to 290; these read DGLT…NVNA, ELWT…DLLA, QGAT…RVDV, and DGWE…SLSA. Residues 327-346 form a disordered region; sequence RHKSSLSRRTSSAGSRGKVV. Phosphoserine is present on residues Ser-333, Ser-337, and Ser-350. The span at 333-342 shows a compositional bias: low complexity; the sequence is SRRTSSAGSR. Positions 373-404 are disordered; the sequence is SASEDQRNSTYNGDIRETRTDQENKDPNPRLE. The segment covering 386-404 has biased composition (basic and acidic residues); the sequence is DIRETRTDQENKDPNPRLE. Ser-477 bears the Phosphoserine mark. Residues 504–525 are disordered; the sequence is GSGVSRTGEGSSEGKAPLIGGR. Residues 531-560 form an ANK 5 repeat; it reads SNGTSVYYTVTSGDPPLLKFKAPIEEMEEK. Cys-564 is lipidated: S-palmitoyl cysteine. Position 565 is a cysteine methyl ester (Cys-565). A lipid anchor (S-farnesyl cysteine) is attached at Cys-565. A propeptide spans 566 to 568 (removed in mature form); sequence RIS.

As to quaternary structure, interacts with PPP1CA, PPP1CB and MSN. Interacts (via its fourth ankyrin repeat) with the mature dimeric form of RPSA/LAMR1. Interacts with EEF1A1. Interacts with PTEN. Interacts with ECE1. Post-translationally, phosphorylated by PKA and, after PKA priming, by GSK3B. Phosphorylation by GSK3B reduces its association with PP1C and enhances PP1C activity. Dephosphorylation by its associated PP1C results in enhanced association with PP1C, but reduced PP1C activity.

It is found in the cell membrane. It localises to the nucleus. The protein resides in the cell projection. Its function is as follows. Regulator of protein phosphatase 1 (PP1) that acts as a positive regulator of pulmonary endothelial cell (EC) barrier function. Protects the endothelial barrier from lipopolysaccharide (LPS)-induced vascular leakage. Involved in the regulation of the PI3K/AKT signaling pathway. Involved in the regulation of angiogenesis and endothelial cell proliferation through the control of ECE1 dephosphorylation, trafficking and activity. Involved in the regulation of endothelial cell filopodia extension. May be a downstream target for TGF-beta1 signaling cascade in endothelial cells. Involved in PKA-mediated moesin dephosphorylation which is important in EC barrier protection against thrombin stimulation. Promotes the interaction of PPP1CA with RPSA/LAMR1 and in turn facilitates the dephosphorylation of RPSA/LAMR1. Involved in the dephosphorylation of EEF1A1. This chain is Protein phosphatase 1 regulatory inhibitor subunit 16B (PPP1R16B), found in Bos taurus (Bovine).